A 752-amino-acid polypeptide reads, in one-letter code: Photosystem I P700 chlorophyll a apoprotein A1 (752 aa).

8 helical membrane-spanning segments follow: residues 73–96 (IFSA…FHGA), 159–182 (LYAT…FHYH), 198–222 (MNHH…HISI), 294–312 (TAHH…GHMY), 349–372 (WHAQ…HHMY), 388–414 (LSLF…IFMV), 436–458 (AIIS…LYIH), and 533–551 (FMVH…LILV). Residues C575 and C584 each contribute to the [4Fe-4S] cluster site. Transmembrane regions (helical) follow at residues 591 to 612 (HVFL…HFSW) and 666 to 688 (LSAY…MFLF). H677 serves as a coordination point for chlorophyll a'. M685 and Y693 together coordinate chlorophyll a. W694 contacts phylloquinone. A helical transmembrane segment spans residues 726–746 (AVGVAHYLLGGIGTTWAFFLA).

Belongs to the PsaA/PsaB family. In terms of assembly, the PsaA/B heterodimer binds the P700 chlorophyll special pair and subsequent electron acceptors. PSI consists of a core antenna complex that captures photons, and an electron transfer chain that converts photonic excitation into a charge separation. The eukaryotic PSI reaction center is composed of at least 11 subunits. It depends on P700 is a chlorophyll a/chlorophyll a' dimer, A0 is one or more chlorophyll a, A1 is one or both phylloquinones and FX is a shared 4Fe-4S iron-sulfur center. as a cofactor.

Its subcellular location is the plastid. It localises to the chloroplast thylakoid membrane. The catalysed reaction is reduced [plastocyanin] + hnu + oxidized [2Fe-2S]-[ferredoxin] = oxidized [plastocyanin] + reduced [2Fe-2S]-[ferredoxin]. Its function is as follows. PsaA and PsaB bind P700, the primary electron donor of photosystem I (PSI), as well as the electron acceptors A0, A1 and FX. PSI is a plastocyanin/cytochrome c6-ferredoxin oxidoreductase, converting photonic excitation into a charge separation, which transfers an electron from the donor P700 chlorophyll pair to the spectroscopically characterized acceptors A0, A1, FX, FA and FB in turn. Oxidized P700 is reduced on the lumenal side of the thylakoid membrane by plastocyanin or cytochrome c6. This chain is Photosystem I P700 chlorophyll a apoprotein A1, found in Gracilaria tenuistipitata var. liui (Red alga).